The following is a 190-amino-acid chain: Xanthine phosphoribosyltransferase (190 aa).

Leu20 and Asn27 together coordinate xanthine. A 5-phospho-alpha-D-ribose 1-diphosphate-binding site is contributed by Ala129–Ala133. A xanthine-binding site is contributed by Lys157.

Belongs to the purine/pyrimidine phosphoribosyltransferase family. Xpt subfamily. Homodimer.

The protein localises to the cytoplasm. It catalyses the reaction XMP + diphosphate = xanthine + 5-phospho-alpha-D-ribose 1-diphosphate. The protein operates within purine metabolism; XMP biosynthesis via salvage pathway; XMP from xanthine: step 1/1. Functionally, converts the preformed base xanthine, a product of nucleic acid breakdown, to xanthosine 5'-monophosphate (XMP), so it can be reused for RNA or DNA synthesis. The polypeptide is Xanthine phosphoribosyltransferase (Clostridioides difficile (strain 630) (Peptoclostridium difficile)).